Here is a 611-residue protein sequence, read N- to C-terminus: Chaperone protein HtpG (611 aa).

The tract at residues 1 to 326 (MSETLERHAF…TEDLPLNVSR (326 aa)) is a; substrate-binding. The tract at residues 327 to 536 (EMLQATPVLA…SGGPDLQMQR (210 aa)) is b. The tract at residues 537-611 (LLRRAGRGFG…RVATALAAQG (75 aa)) is c.

This sequence belongs to the heat shock protein 90 family. As to quaternary structure, homodimer.

The protein localises to the cytoplasm. Functionally, molecular chaperone. Has ATPase activity. In Methylobacterium nodulans (strain LMG 21967 / CNCM I-2342 / ORS 2060), this protein is Chaperone protein HtpG.